Consider the following 687-residue polypeptide: Translation initiation factor IF-2 (687 aa).

Residues Lys-186–Lys-355 form the tr-type G domain. The G1 stretch occupies residues Gly-195–Thr-202. A GTP-binding site is contributed by Gly-195 to Thr-202. Positions Gly-220–His-224 are G2. The segment at Asp-241–Gly-244 is G3. GTP-binding positions include Asp-241 to His-245 and Asn-295 to Asp-298. A G4 region spans residues Asn-295–Asp-298. The G5 stretch occupies residues Ser-331 to Lys-333.

The protein belongs to the TRAFAC class translation factor GTPase superfamily. Classic translation factor GTPase family. IF-2 subfamily.

It localises to the cytoplasm. Its function is as follows. One of the essential components for the initiation of protein synthesis. Protects formylmethionyl-tRNA from spontaneous hydrolysis and promotes its binding to the 30S ribosomal subunits. Also involved in the hydrolysis of GTP during the formation of the 70S ribosomal complex. The chain is Translation initiation factor IF-2 from Clostridium botulinum (strain Alaska E43 / Type E3).